The sequence spans 191 residues: Probable GTP-binding protein EngB (191 aa).

In terms of domain architecture, EngB-type G spans 22 to 190 (RLPEIAFLGR…WQAITTTLQA (169 aa)). GTP contacts are provided by residues 30–37 (GRSNVGKS), 57–61 (GRTQT), 75–78 (DLPG), 142–145 (TKTD), and 169–171 (FSA). 2 residues coordinate Mg(2+): S37 and T59.

Belongs to the TRAFAC class TrmE-Era-EngA-EngB-Septin-like GTPase superfamily. EngB GTPase family. Mg(2+) serves as cofactor.

Its function is as follows. Necessary for normal cell division and for the maintenance of normal septation. This Solibacter usitatus (strain Ellin6076) protein is Probable GTP-binding protein EngB.